The primary structure comprises 154 residues: Large ribosomal subunit protein uL13 (154 aa).

It belongs to the universal ribosomal protein uL13 family. Part of the 50S ribosomal subunit.

This protein is one of the early assembly proteins of the 50S ribosomal subunit, although it is not seen to bind rRNA by itself. It is important during the early stages of 50S assembly. This chain is Large ribosomal subunit protein uL13, found in Sinorhizobium medicae (strain WSM419) (Ensifer medicae).